We begin with the raw amino-acid sequence, 992 residues long: Disks large-associated protein 1 (992 aa).

Disordered regions lie at residues 150 to 209 (TKSH…SWWS) and 355 to 376 (KAMG…PKVA). A Phosphoserine modification is found at S169. Residues 194 to 209 (RSNASNASPTSPSWWS) show a composition bias toward low complexity. Phosphoserine occurs at positions 362, 365, 368, 372, 389, 418, 421, 425, 428, 437, 509, 516, and 578. At T579 the chain carries Phosphothreonine. Residues S581 and S605 each carry the phosphoserine modification. T606 carries the phosphothreonine modification. S608 and S611 each carry phosphoserine. Interaction with DYL2 stretches follow at residues 665–676 (LSIGIQVDDAEE) and 687–698 (NKFQSVGVQVEE). The disordered stretch occupies residues 914 to 980 (WKQMDPLDKK…QNSATESAES (67 aa)). Basic and acidic residues-rich tracts occupy residues 918-927 (DPLDKKERRA) and 943-958 (IRER…EARK). At S947 the chain carries Phosphoserine. Residues 969 to 978 (VRQNSATESA) show a composition bias toward polar residues. The PDZ-binding signature appears at 990–992 (TRL).

This sequence belongs to the SAPAP family. In terms of assembly, interacts with the guanylate kinase-like domain of DLG1, DLG2, DLG3, DLG4 and AIP1. Interacts with the PDZ domain of SHANK1, SHANK2 and SHANK3. Found in a complex with DLG4 and SHANK1, SHANK2 or SHANK3. Found in a complex with DLG4 and BEGAIN. Interacts with DYL2 and LRFN1. Interacts with MPP2 (via the SH3-Guanylate kinase-like sub-module). Post-translationally, ubiquitinated by TRIM3; leading to proteasomal degradation. Highest levels in the neocortex, part of the hippocampus, the granule cell layer of the cerebellum, the glomerular layer of the olfactory bulb, the inner plexiform layer of the retina, the ventral and dorsal horn of the spinal cord, the neuromuscular junction and the submandibular ganglion.

It localises to the cell membrane. The protein resides in the postsynaptic density. It is found in the synapse. Functionally, part of the postsynaptic scaffold in neuronal cells. This chain is Disks large-associated protein 1 (Dlgap1), found in Mus musculus (Mouse).